Here is a 589-residue protein sequence, read N- to C-terminus: Cytochrome P450 monooxygenase TRI13 (589 aa).

An N-terminal signal peptide occupies residues 1-21; the sequence is MFLSLCLMVLALYLLYKWALP. N-linked (GlcNAc...) asparagine glycosylation is found at Asn52, Asn219, Asn243, and Asn366. Cys531 contacts heme.

Belongs to the cytochrome P450 family. It depends on heme as a cofactor.

It functions in the pathway sesquiterpene biosynthesis; trichothecene biosynthesis. Cytochrome P450 monooxygenase; part of the core gene cluster that mediates the biosynthesis of trichothecenes, a very large family of chemically related bicyclic sesquiterpene compounds acting as mycotoxins, including T2-toxin. The biosynthesis of trichothecenes begins with the cyclization of farnesyl diphosphate to trichodiene and is catalyzed by the trichodiene synthase TRI5. Trichodiene undergoes a series of oxygenations catalyzed by the cytochrome P450 monooxygenase TRI4. TRI4 controls the addition of four oxygens at C-2, C-3, C-11, and the C-12, C-13-epoxide to form the intermediate isotrichotriol. Isotrichotriol then undergoes a non-enzymatic isomerization and cyclization to form isotrichodermol. During this process, the oxygen at the C-2 position becomes the pyran ring oxygen and the hydroxyl group at C-11 is lost. More complex type A trichothecenes are built by modifying isotrichodermol through a series of paired hydroxylation and acetylation or acylation steps. Isotrichodermol is converted to isotrichodermin by the acetyltransferase TRI101. TRI101 encodes a C-3 transacetylase that acts as a self-protection or resistance factor during biosynthesis and that the presence of a free C-3 hydroxyl group is a key component of Fusarium trichothecene phytotoxicity. A second hydroxyl group is added to C-15 by the trichothecene C-15 hydroxylase TRI11, producing 15-decalonectrin, which is then acetylated by TRI3, producing calonectrin. A third hydroxyl group is added at C-4 by the cytochrome P450 monooxygenase TRI13, converting calonectrin to 3,15-diacetoxyspirpenol, which is subsequently acetylated by the acetyltransferase TRI7. A fourth hydroxyl group is added to C-8 by the cytochrome P450 monooxygenase TRI1, followed by the addition of an isovaleryl moiety by TRI16. Finally, the acetyl group is removed from the C-3 position by the trichothecene C-3 esterase TRI8 to produce T-2 toxin. This Fusarium sporotrichioides protein is Cytochrome P450 monooxygenase TRI13.